The following is a 768-amino-acid chain: ATP-dependent zinc metalloprotease FtsH (768 aa).

Residues 1–33 (MADRDKNDIRKRLEELRKDNNRRNNRQDNGNRS) lie on the Cytoplasmic side of the membrane. The chain crosses the membrane as a helical span at residues 34-54 (PFSGFLFFIFVILLFTFTLLF). Residues 55-139 (HRDIQTYFQE…KLNSLQPSGG (85 aa)) lie on the Periplasmic side of the membrane. Residues 140–160 (GFFLLLLGQFLPMIIMIGLMV) form a helical membrane-spanning segment. Residues 161-768 (YLAKKMVGGS…SNFKLPSFME (608 aa)) lie on the Cytoplasmic side of the membrane. Residue 238-245 (GRPGTGKT) coordinates ATP. His-461 is a binding site for Zn(2+). Residue Glu-462 is part of the active site. Residues His-465 and Asp-536 each coordinate Zn(2+). The disordered stretch occupies residues 647–768 (EESIQKGSEG…SNFKLPSFME (122 aa)). Over residues 669–698 (QENKTVEAEVHDSNLKSDTEKLAEAVREIT) the composition is skewed to basic and acidic residues. Positions 715–731 (KDSDDNEKNDDDNENSD) are enriched in acidic residues.

This sequence in the central section; belongs to the AAA ATPase family. The protein in the C-terminal section; belongs to the peptidase M41 family. In terms of assembly, homohexamer. Zn(2+) is required as a cofactor.

The protein localises to the cell inner membrane. Acts as a processive, ATP-dependent zinc metallopeptidase for both cytoplasmic and membrane proteins. Plays a role in the quality control of integral membrane proteins. In Leptotrichia buccalis (strain ATCC 14201 / DSM 1135 / JCM 12969 / NCTC 10249 / C-1013-b), this protein is ATP-dependent zinc metalloprotease FtsH.